The sequence spans 311 residues: HPr kinase/phosphorylase (311 aa).

Residues His-138 and Lys-159 contribute to the active site. 153–160 lines the ATP pocket; the sequence is GDSGIGKS. Residue Ser-160 participates in Mg(2+) binding. Asp-177 (proton acceptor; for phosphorylation activity. Proton donor; for dephosphorylation activity) is an active-site residue. The tract at residues 201–210 is important for the catalytic mechanism of both phosphorylation and dephosphorylation; the sequence is LEIRGVGIID. Glu-202 contacts Mg(2+). Residue Arg-243 is part of the active site. The important for the catalytic mechanism of dephosphorylation stretch occupies residues 264-269; sequence PVKTGR.

Belongs to the HPrK/P family. As to quaternary structure, homohexamer. Mg(2+) is required as a cofactor.

The catalysed reaction is [HPr protein]-L-serine + ATP = [HPr protein]-O-phospho-L-serine + ADP + H(+). It catalyses the reaction [HPr protein]-O-phospho-L-serine + phosphate + H(+) = [HPr protein]-L-serine + diphosphate. Its function is as follows. Catalyzes the ATP- as well as the pyrophosphate-dependent phosphorylation of a specific serine residue in HPr, a phosphocarrier protein of the phosphoenolpyruvate-dependent sugar phosphotransferase system (PTS). HprK/P also catalyzes the pyrophosphate-producing, inorganic phosphate-dependent dephosphorylation (phosphorolysis) of seryl-phosphorylated HPr (P-Ser-HPr). The two antagonistic activities of HprK/P are regulated by several intracellular metabolites, which change their concentration in response to the absence or presence of rapidly metabolisable carbon sources (glucose, fructose, etc.) in the growth medium. Therefore, by controlling the phosphorylation state of HPr, HPrK/P is a sensor enzyme that plays a major role in the regulation of carbon metabolism and sugar transport: it mediates carbon catabolite repression (CCR), and regulates PTS-catalyzed carbohydrate uptake and inducer exclusion. This Streptococcus sanguinis (strain SK36) protein is HPr kinase/phosphorylase.